We begin with the raw amino-acid sequence, 448 residues long: Protein W (448 aa).

Disordered regions lie at residues 26–104 (KTYG…DPDD) and 193–406 (FVPK…KKGA). Composition is skewed to polar residues over residues 28–37 (YGRSSIQQPS) and 77–96 (DLSS…SNTR). Acidic residues predominate over residues 240–252 (SDDEDENQLEYED). Serine 257 carries the post-translational modification Phosphoserine; by host. Positions 296 to 317 (FPEKEETPDVRRKDSLMQDSCK) are enriched in basic and acidic residues. At serine 350 the chain carries Phosphoserine; by host.

This is Protein W (P/V/C) from Hendra virus (isolate Horse/Autralia/Hendra/1994).